The following is a 158-amino-acid chain: MNVLIDNRQTKVDASGLEALVVRAIKATLEEEEVVDEVEVSVSFVDNEEIRKLNKYYRGIDSSTDVLSFPLMEFEEIEEGEEDEKDAEEIYPIGDIVISLEKAKEQAEEYGHSFEREVAYLTVHSMLHLLGYDHETEEERKLMREKEEKVMERLGLRR.

Zn(2+) is bound by residues H124, H128, and H134.

This sequence belongs to the endoribonuclease YbeY family. Requires Zn(2+) as cofactor.

Its subcellular location is the cytoplasm. Functionally, single strand-specific metallo-endoribonuclease involved in late-stage 70S ribosome quality control and in maturation of the 3' terminus of the 16S rRNA. The polypeptide is Endoribonuclease YbeY (Caldanaerobacter subterraneus subsp. tengcongensis (strain DSM 15242 / JCM 11007 / NBRC 100824 / MB4) (Thermoanaerobacter tengcongensis)).